A 291-amino-acid polypeptide reads, in one-letter code: Serine hydrolase BPHL (291 aa).

The N-terminal stretch at 1-37 (MATATVRPAAQRLRLLLSPLKSRICVPQAEPVATFGT) is a signal peptide. Positions 62–173 (AILLLPGMLG…ANAYVTEEDS (112 aa)) constitute an AB hydrolase-1 domain. K74 is modified (N6-acetyllysine; alternate). K74 is subject to N6-succinyllysine; alternate. 2 positions are modified to N6-acetyllysine: K86 and K119. K126 bears the N6-acetyllysine; alternate mark. K126 bears the N6-succinyllysine; alternate mark. The active-site Nucleophile is S139. K184 carries the post-translational modification N6-succinyllysine. K191 is subject to N6-acetyllysine; alternate. K191 carries the N6-succinyllysine; alternate modification. Residue K217 is modified to N6-acetyllysine. Residue E221 coordinates Mg(2+). Position 243 is an N6-acetyllysine (K243). The active-site Charge relay system is D244. 2 positions are modified to N6-acetyllysine; alternate: K260 and K271. An N6-succinyllysine; alternate mark is found at K260 and K271. H272 functions as the Charge relay system in the catalytic mechanism.

It belongs to the AB hydrolase superfamily. Lipase family. As to quaternary structure, monomer. May also form homodimers.

The protein localises to the mitochondrion. The catalysed reaction is L-homocysteine thiolactone + H2O = L-homocysteine + H(+). It carries out the reaction valacyclovir + H2O = acyclovir + L-valine + H(+). Functionally, specific alpha-amino acid ester serine hydrolase that prefers small, hydrophobic, and aromatic side chains and does not have a stringent requirement for the leaving group other than preferring a primary alcohol. Has homocysteine-thiolactonase activity (in vitro) and may play a significant role in the detoxification of homocysteine thiolactone in vivo. Catalyzes the hydrolytic activation of amino acid ester prodrugs of nucleoside analogs such as valacyclovir and valganciclovir, converting them into their active forms (acyclovir and ganciclovir). The polypeptide is Serine hydrolase BPHL (Bphl) (Mus musculus (Mouse)).